The following is a 138-amino-acid chain: Fusaristatin A biosynthesis cluster protein FGSG_08206 (138 aa).

The Stress-response A/B barrel domain occupies 33–130 (VHRVTMFKMP…TIDGMMTVFF (98 aa)).

Its pathway is secondary metabolite biosynthesis. Functionally, part of the gene cluster that mediates the biosynthesis of the lipopeptide fusaristatin A. Fusaristatin A consists of a polyketide chain linked to three amino acid residues glutamine (Gln), dehydroalanine (dehydro-Ala), and beta-aminoisobutyric acid. The biosynthesis starts with formation of a linear polyketide chain by the highly reducing polyketide synthase PKS6. The gene cluster does not contain an acyl-CoA ligase or an acyl-transferase, and it is therefore predicted that the polyketide is transferred directly to the nonribosomal peptide synthetase NRPS7. Modules 1-3 from NRPS7 incorporate dehydro-Ala, Gln, and beta-aminoisobutyric acid in the compound, which is released by cyclization. The beta-aminoisobutyric acid units are most likely not freely available to the NRPS, but can be synthesized from thymine, which requires a dehydrogenase, a monooxygenase, and an aminotransferase. The fusaristatin A cluster contains a cytochrome P450 monooxygenase (FGSG_08207) and an aminotransferase (FGSG_17085), which theoretically can perform two of the enzymatic steps. The enzymes may however also be involved in biosynthesis of dehydroalanine or modification of the polyketide. The dehydro-Ala residue can be a result of cyclization, where serine is dehydrated. The last gene of the cluster encodes a protein with an A/B barrel domain found in variable enzymes, which hampers functional prediction. This chain is Fusaristatin A biosynthesis cluster protein FGSG_08206, found in Gibberella zeae (strain ATCC MYA-4620 / CBS 123657 / FGSC 9075 / NRRL 31084 / PH-1) (Wheat head blight fungus).